Reading from the N-terminus, the 172-residue chain is YTGIGVYLEDKAVPSLAAKWKGKTSEELVHTLHFYRDIISGPFEKLIRGSKILPLAGAEYSKKVMENCVAHMKSVGTYGDAEAAAIEKFAEAFKNVNFAPGPLFLYRQSPDGILGLSFSEDVTIPEKEAAVIENKAVSAAVLETMIGEHAVSPDLKRILASRLLRIEHGIIV.

Substrate-binding residues include threonine 2, asparagine 67, and threonine 144.

It belongs to the chalcone isomerase family.

The catalysed reaction is a chalcone = a flavanone.. The protein operates within secondary metabolite biosynthesis; flavonoid biosynthesis. In terms of biological role, catalyzes the intramolecular cyclization of bicyclic chalcones into tricyclic (S)-flavanones. Responsible for the isomerization of 4,2',4',6'-tetrahydroxychalcone (also termed chalcone) into naringenin. The chain is Chalcone--flavanone isomerase 1 (CHI1) from Glycine max (Soybean).